The following is a 216-amino-acid chain: Adenylate kinase (216 aa).

10 to 15 (GAGKGT) contacts ATP. Positions 30–59 (STGDMLRAAVAAGTEVGKRAKAVMDAGKLV) are NMP. AMP is bound by residues threonine 31, arginine 36, 57–59 (KLV), 85–88 (GFPR), and glutamine 92. The interval 126 to 163 (GRYTCANCGAGYHDENLRPKVEGVCDRCGSTHFKRRAD) is LID. Residue arginine 127 participates in ATP binding. Residues cysteine 130, cysteine 133, cysteine 150, and cysteine 153 each coordinate Zn(2+). Residues arginine 160 and arginine 172 each coordinate AMP. Alanine 200 provides a ligand contact to ATP.

It belongs to the adenylate kinase family. As to quaternary structure, monomer.

It localises to the cytoplasm. The enzyme catalyses AMP + ATP = 2 ADP. The protein operates within purine metabolism; AMP biosynthesis via salvage pathway; AMP from ADP: step 1/1. Functionally, catalyzes the reversible transfer of the terminal phosphate group between ATP and AMP. Plays an important role in cellular energy homeostasis and in adenine nucleotide metabolism. This chain is Adenylate kinase, found in Rhizobium rhizogenes (strain K84 / ATCC BAA-868) (Agrobacterium radiobacter).